Here is a 236-residue protein sequence, read N- to C-terminus: Ion-translocating oxidoreductase complex subunit E (236 aa).

The next 6 helical transmembrane spans lie at 18-38 (ALVQ…ATNA), 39-59 (LGLG…VSAL), 69-89 (IPIY…LINA), 92-112 (FGLY…CIVI), 128-148 (ALDG…LGAL), and 182-202 (PFLL…MLAF). The interval 217-236 (RSAVGQALRGAAPTDNHEQA) is disordered.

The protein belongs to the NqrDE/RnfAE family. The complex is composed of six subunits: RnfA, RnfB, RnfC, RnfD, RnfE and RnfG.

It localises to the cell inner membrane. Its function is as follows. Part of a membrane-bound complex that couples electron transfer with translocation of ions across the membrane. This Edwardsiella ictaluri (strain 93-146) protein is Ion-translocating oxidoreductase complex subunit E.